A 144-amino-acid chain; its full sequence is Large ribosomal subunit protein uL15 (144 aa).

The interval 1–48 is disordered; that stretch reads MIKLECLQDPSPRKRRTKLLGRGPSSGHGKTSGRGHKGDGSRSGYKRR.

The protein belongs to the universal ribosomal protein uL15 family. As to quaternary structure, part of the 50S ribosomal subunit.

Functionally, binds to the 23S rRNA. This Chlamydia trachomatis serovar L2 (strain ATCC VR-902B / DSM 19102 / 434/Bu) protein is Large ribosomal subunit protein uL15.